A 154-amino-acid chain; its full sequence is uncharacterized protein (154 aa).

The next 2 membrane-spanning stretches (helical) occupy residues 19-39 and 51-71; these read LFAY…GLLL and ADQV…LLFA.

The protein resides in the cell membrane. This is an uncharacterized protein from Mycobacterium tuberculosis (strain CDC 1551 / Oshkosh).